A 64-amino-acid chain; its full sequence is Large ribosomal subunit protein bL32 (64 aa).

Basic residues predominate over residues 1-15; it reads MAVPKRKVSKSRRDS. Positions 1–21 are disordered; sequence MAVPKRKVSKSRRDSRRAQTF.

Belongs to the bacterial ribosomal protein bL32 family.

This is Large ribosomal subunit protein bL32 from Symbiobacterium thermophilum (strain DSM 24528 / JCM 14929 / IAM 14863 / T).